The sequence spans 139 residues: D-ribose pyranase (139 aa).

H20 acts as the Proton donor in catalysis. Substrate contacts are provided by residues D28, H106, and 128 to 130 (YAN).

It belongs to the RbsD / FucU family. RbsD subfamily. Homodecamer.

Its subcellular location is the cytoplasm. It carries out the reaction beta-D-ribopyranose = beta-D-ribofuranose. The protein operates within carbohydrate metabolism; D-ribose degradation; D-ribose 5-phosphate from beta-D-ribopyranose: step 1/2. Catalyzes the interconversion of beta-pyran and beta-furan forms of D-ribose. The protein is D-ribose pyranase of Aliivibrio salmonicida (strain LFI1238) (Vibrio salmonicida (strain LFI1238)).